Reading from the N-terminus, the 154-residue chain is Endoribonuclease YbeY (154 aa).

3 residues coordinate Zn(2+): H117, H121, and H127.

It belongs to the endoribonuclease YbeY family. Zn(2+) serves as cofactor.

The protein localises to the cytoplasm. Functionally, single strand-specific metallo-endoribonuclease involved in late-stage 70S ribosome quality control and in maturation of the 3' terminus of the 16S rRNA. The protein is Endoribonuclease YbeY of Mycoplasma pneumoniae (strain ATCC 29342 / M129 / Subtype 1) (Mycoplasmoides pneumoniae).